We begin with the raw amino-acid sequence, 766 residues long: 5-methyltetrahydropteroyltriglutamate--homocysteine methyltransferase (766 aa).

Residues 23–26 (RELK) and K121 contribute to the 5-methyltetrahydropteroyltri-L-glutamate site. L-homocysteine-binding positions include 438–440 (IGS) and E491. L-methionine-binding positions include 438–440 (IGS) and E491. 5-methyltetrahydropteroyltri-L-glutamate is bound by residues 522 to 523 (RC) and W568. Residue D606 participates in L-homocysteine binding. D606 serves as a coordination point for L-methionine. E612 provides a ligand contact to 5-methyltetrahydropteroyltri-L-glutamate. Zn(2+) contacts are provided by H648, C650, and E672. Catalysis depends on H701, which acts as the Proton donor. Residue C733 participates in Zn(2+) binding.

This sequence belongs to the vitamin-B12 independent methionine synthase family. It depends on Zn(2+) as a cofactor.

The catalysed reaction is 5-methyltetrahydropteroyltri-L-glutamate + L-homocysteine = tetrahydropteroyltri-L-glutamate + L-methionine. It participates in amino-acid biosynthesis; L-methionine biosynthesis via de novo pathway; L-methionine from L-homocysteine (MetE route): step 1/1. Catalyzes the transfer of a methyl group from 5-methyltetrahydrofolate to homocysteine resulting in methionine formation. The chain is 5-methyltetrahydropteroyltriglutamate--homocysteine methyltransferase from Photobacterium profundum (strain SS9).